The following is a 98-amino-acid chain: uncharacterized protein (98 aa).

The MOSC domain maps to 30 to 98; it reads KKVVPSVKIH…RRKFCRVRLE (69 aa).

This is an uncharacterized protein from Haemophilus influenzae (strain ATCC 51907 / DSM 11121 / KW20 / Rd).